The primary structure comprises 440 residues: Fibulin-7 (440 aa).

Residues 1–24 (MGPGSQRALFLLLLLLASPGARAF) form the signal peptide. A coiled-coil region spans residues 28-73 (LNKQQLLTTIRQLQQLLKGQETRFTEGIRNMKSRLAALQNTVNKMT). The 58-residue stretch at 79 to 136 (VSCPALEAPPDGKKFGSKYLVDHEVYFTCNPGFQLVGPSSVVCLANGSWTGEQPRCRD) folds into the Sushi domain. 11 cysteine pairs are disulfide-bonded: Cys81-Cys121, Cys107-Cys134, Cys140-Cys151, Cys145-Cys160, Cys162-Cys171, Cys229-Cys245, Cys241-Cys254, Cys256-Cys269, Cys275-Cys288, Cys282-Cys297, and Cys302-Cys319. Residue Asn124 is glycosylated (N-linked (GlcNAc...) asparagine). An EGF-like 1; calcium-binding domain is found at 136–172 (DISECSSQPCHNGGTCVEGINHYRCICPPGKTGNRCQ). One can recognise an EGF-like 2; calcium-binding domain in the interval 225-270 (DVNECEIYGQKGRPRLCMHACVNTPGSYRCTCPSGYRILADGKSCE). An EGF-like 3; calcium-binding domain is found at 271-320 (DVDECAGPQHMCPRGTTCINTGGGFQCVNPECPEGSGNISYVKTSPFQCE). Asn308 is a glycosylation site (N-linked (GlcNAc...) asparagine).

The protein belongs to the fibulin family. As to quaternary structure, interacts with heparin, FBLN1, FN1 and DSPP. Preferentially binds dental mesenchyme cells and odontoblasts but not dental epithelial cells or nondental cells. Binding requires a heparan sulfate-containing receptor on the cell surface as well as an integrin. N-glycosylated. In terms of tissue distribution, highly expressed in newborn incisors and molars. A weaker expression is seen in the brain, kidneys, muscles and bones.

Its subcellular location is the secreted. It is found in the extracellular space. The protein resides in the extracellular matrix. An adhesion molecule that interacts with extracellular matrix molecules in developing teeth and may play important roles in differentiation and maintenance of odontoblasts as well as in dentin formation. This chain is Fibulin-7 (Fbln7), found in Mus musculus (Mouse).